The chain runs to 380 residues: DNA replication and repair protein RecF (380 aa).

Gly30 to Thr37 contacts ATP.

This sequence belongs to the RecF family.

It is found in the cytoplasm. The RecF protein is involved in DNA metabolism; it is required for DNA replication and normal SOS inducibility. RecF binds preferentially to single-stranded, linear DNA. It also seems to bind ATP. In Mycobacterium sp. (strain JLS), this protein is DNA replication and repair protein RecF.